Here is a 363-residue protein sequence, read N- to C-terminus: Pyruvate dehydrogenase E1 component subunit beta-1, mitochondrial (363 aa).

The N-terminal 29 residues, 1–29 (MLGILRQRAIDGASTLRRTRFALVSARSY), are a transit peptide targeting the mitochondrion. Glutamate 92 is a binding site for thiamine diphosphate. K(+) contacts are provided by isoleucine 145, alanine 193, isoleucine 194, and aspartate 196. Residues lysine 247 and lysine 254 each participate in a glycyl lysine isopeptide (Lys-Gly) (interchain with G-Cter in ubiquitin) cross-link.

As to quaternary structure, tetramer of 2 alpha and 2 beta subunits. Thiamine diphosphate serves as cofactor. As to expression, expressed in roots, immature rosettes, and mature rosettes.

The protein resides in the mitochondrion matrix. The enzyme catalyses N(6)-[(R)-lipoyl]-L-lysyl-[protein] + pyruvate + H(+) = N(6)-[(R)-S(8)-acetyldihydrolipoyl]-L-lysyl-[protein] + CO2. In terms of biological role, the pyruvate dehydrogenase complex catalyzes the overall conversion of pyruvate to acetyl-CoA and CO(2). It contains multiple copies of three enzymatic components: pyruvate dehydrogenase (E1), dihydrolipoamide acetyltransferase (E2) and lipoamide dehydrogenase (E3). This Arabidopsis thaliana (Mouse-ear cress) protein is Pyruvate dehydrogenase E1 component subunit beta-1, mitochondrial (PDH2).